The chain runs to 309 residues: NADH-cytochrome b5 reductase 1 (309 aa).

The chain crosses the membrane as a helical span at residues 29–49; sequence EFVPYAVALTAVLAGFKLFTG. One can recognise an FAD-binding FR-type domain in the interval 60-165; sequence TEFQEFVLKE…RGPKGAMVYT (106 aa). Residues 145–160 and 171–208 each bind FAD; these read TTLK…GPKG and HIGM…KVDL.

Belongs to the flavoprotein pyridine nucleotide cytochrome reductase family. In terms of assembly, monomer. Component of the 2-(3-amino-3-carboxypropyl)histidine synthase complex composed of dph1, dph2, dph3 and a NADH-dependent reductase, predominantly cbr1. The cofactor is FAD.

It localises to the mitochondrion outer membrane. The catalysed reaction is 2 Fe(III)-[cytochrome b5] + NADH = 2 Fe(II)-[cytochrome b5] + NAD(+) + H(+). It carries out the reaction 2 Fe(3+)-[Dph3] + NADH = 2 Fe(2+)-[Dph3] + NAD(+) + H(+). It participates in protein modification; peptidyl-diphthamide biosynthesis. Functionally, NADH-dependent reductase for dph3 and cytochrome b5. Required for the first step of diphthamide biosynthesis, a post-translational modification of histidine which occurs in elongation factor 2. Dph1 and dph2 transfer a 3-amino-3-carboxypropyl (ACP) group from S-adenosyl-L-methionine (SAM) to a histidine residue, the reaction is assisted by a reduction system comprising dph3 and a NADH-dependent reductase, predominantly cbr1. By reducing dph3, also involved in the formation of the tRNA wobble base modification mcm5s 2U (5-methoxycarbonylmethyl-2-thiouridine), mediated by the elongator complex. The cytochrome b5/NADH cytochrome b5 reductase electron transfer system supports the catalytic activity of several sterol biosynthetic enzymes. The protein is NADH-cytochrome b5 reductase 1 (cbr1) of Aspergillus clavatus (strain ATCC 1007 / CBS 513.65 / DSM 816 / NCTC 3887 / NRRL 1 / QM 1276 / 107).